Here is a 595-residue protein sequence, read N- to C-terminus: Actin-histidine N-methyltransferase (595 aa).

A disordered region spans residues 1–22 (MGKKSRVKTQKSGTGATATVSP). Residues 10–20 (QKSGTGATATV) show a composition bias toward polar residues. S-adenosyl-L-methionine is bound by residues R75, 104–106 (EGF), R254, 275–279 (DMCNH), and 325–327 (SGF). The 221-residue stretch at 94–314 (EGFEMVNFKE…AGEQIYIFYG (221 aa)) folds into the SET domain. S513 carries the phosphoserine modification. Residues 552-595 (LVNGENCIPNGTRSENEDLNQEENKRAVEDAKGSSSDSTDAVKK) form a disordered region. Residues 573 to 583 (EENKRAVEDAK) are compositionally biased toward basic and acidic residues. Polar residues predominate over residues 584 to 595 (GSSSDSTDAVKK).

This sequence belongs to the class V-like SAM-binding methyltransferase superfamily. SETD3 actin-histidine methyltransferase family. Interacts with MYOD1. Phosphorylated by GSK3B, which is required for recognition by the SCF(FBXW7) complex and subsequent degradation. In terms of processing, ubiquitinated by the SCF(FBXW7) complex following phosphorylation by GSK3B, leading to its degradation by the proteasome.

Its subcellular location is the cytoplasm. It localises to the nucleus. The enzyme catalyses L-histidyl-[protein] + S-adenosyl-L-methionine = N(tele)-methyl-L-histidyl-[protein] + S-adenosyl-L-homocysteine + H(+). Functionally, protein-histidine N-methyltransferase that specifically mediates 3-methylhistidine (tele-methylhistidine) methylation of actin at 'His-73'. Histidine methylation of actin is required for smooth muscle contraction of the laboring uterus during delivery. Does not have protein-lysine N-methyltransferase activity and probably only catalyzes histidine methylation of actin. The polypeptide is Actin-histidine N-methyltransferase (Otolemur garnettii (Small-eared galago)).